A 258-amino-acid polypeptide reads, in one-letter code: Phosphoadenosine 5'-phosphosulfate reductase (258 aa).

The active-site Nucleophile; cysteine thiosulfonate intermediate is the C244.

It belongs to the PAPS reductase family. CysH subfamily.

It is found in the cytoplasm. The enzyme catalyses [thioredoxin]-disulfide + sulfite + adenosine 3',5'-bisphosphate + 2 H(+) = [thioredoxin]-dithiol + 3'-phosphoadenylyl sulfate. The protein operates within sulfur metabolism; hydrogen sulfide biosynthesis; sulfite from sulfate: step 3/3. In terms of biological role, catalyzes the formation of sulfite from phosphoadenosine 5'-phosphosulfate (PAPS) using thioredoxin as an electron donor. The chain is Phosphoadenosine 5'-phosphosulfate reductase from Vibrio vulnificus (strain YJ016).